A 272-amino-acid chain; its full sequence is Phosphatidylglycerol--prolipoprotein diacylglyceryl transferase (272 aa).

Helical transmembrane passes span 17-37 (LQVHWYGLMYLLAFLCAWGLA), 55-75 (LVFYGALGVVLGGRIGYVLFY), 90-110 (VWTGGMSFHGGFLGVMIAMLF), 125-145 (FIAPCVPTGLMLGRIGNFIGG), 174-194 (PSQIYQALCEGLLLFIILWWF), 202-222 (MAVSALFLMGYGVARFVMEFF), and 230-250 (GFILFGWMTKGQILTVPMLLI). Residue R138 participates in a 1,2-diacyl-sn-glycero-3-phospho-(1'-sn-glycerol) binding.

It belongs to the Lgt family.

It localises to the cell inner membrane. The enzyme catalyses L-cysteinyl-[prolipoprotein] + a 1,2-diacyl-sn-glycero-3-phospho-(1'-sn-glycerol) = an S-1,2-diacyl-sn-glyceryl-L-cysteinyl-[prolipoprotein] + sn-glycerol 1-phosphate + H(+). It participates in protein modification; lipoprotein biosynthesis (diacylglyceryl transfer). In terms of biological role, catalyzes the transfer of the diacylglyceryl group from phosphatidylglycerol to the sulfhydryl group of the N-terminal cysteine of a prolipoprotein, the first step in the formation of mature lipoproteins. In Acinetobacter baumannii (strain SDF), this protein is Phosphatidylglycerol--prolipoprotein diacylglyceryl transferase.